Consider the following 427-residue polypeptide: Endothelin-1 receptor (427 aa).

Positions 1–20 are cleaved as a signal peptide; it reads METFCFRVSFWVALLGCVIS. The Extracellular segment spans residues 21-80; the sequence is DNPESHSTNLSTHVDDFTTFRGTEFSLVVTTHRPTNLALPSNGSMHNYCPQQTKITSAFK. N-linked (GlcNAc...) asparagine glycans are attached at residues N29 and N62. A helical transmembrane segment spans residues 81–102; it reads YINTVISCTIFIVGMVGNATLL. Residues 103 to 112 are Cytoplasmic-facing; it reads RIIYQNKCMR. The chain crosses the membrane as a helical span at residues 113 to 132; sequence NGPNALIASLALGDLIYVVI. Over 133-159 the chain is Extracellular; that stretch reads DLPINVFKLLAGRWPFENHDFGVFLCK. A disulfide bridge links C158 with C239. A helical membrane pass occupies residues 160 to 181; that stretch reads LFPFLQKSSVGITVLNLCALSV. The Cytoplasmic portion of the chain corresponds to 182–205; sequence DRYRAVASWSRVQGIGIPLVTAIE. The helical transmembrane segment at 206–229 threads the bilayer; it reads IVSIWILSFILAIPEAIGFVMVPF. The Extracellular segment spans residues 230-256; that stretch reads EYKGEEHKTCMLNATSKFMEFYQDVKD. Residues 257 to 278 traverse the membrane as a helical segment; sequence WWLFGFYFCMPLVCTAIFYTLM. Over 279 to 306 the chain is Cytoplasmic; the sequence is TCEMLNRRNGSLRIALSEHLKQRREVAK. Residues 307 to 328 form a helical membrane-spanning segment; sequence TVFCLVVIFALCWFPLHLSRIL. Residues 329–347 lie on the Extracellular side of the membrane; the sequence is KKTVYDEMDKNRCELLSFL. Residues 348-372 traverse the membrane as a helical segment; sequence LLMDYIGINLATMNSCINPIALYFV. Residues 373-427 lie on the Cytoplasmic side of the membrane; the sequence is SKKFKNCFQSCLCCCCYQSKSLMTSVPMNGTSIQWKNHEQNNHNTERSSHKDSIN. S425 bears the Phosphoserine mark.

The protein belongs to the G-protein coupled receptor 1 family. Endothelin receptor subfamily. EDNRA sub-subfamily. In terms of assembly, interacts with HDAC7 and KAT5.

It is found in the cell membrane. Its function is as follows. Receptor for endothelin-1. Mediates its action by association with G proteins that activate a phosphatidylinositol-calcium second messenger system. The rank order of binding affinities for ET-A is: ET1 &gt; ET2 &gt;&gt; ET3. This chain is Endothelin-1 receptor, found in Sus scrofa (Pig).